The chain runs to 158 residues: NADH-quinone oxidoreductase subunit B (158 aa).

[4Fe-4S] cluster-binding residues include Cys-37, Cys-38, Cys-102, and Cys-132.

The protein belongs to the complex I 20 kDa subunit family. NDH-1 is composed of 14 different subunits. Subunits NuoB, C, D, E, F, and G constitute the peripheral sector of the complex. [4Fe-4S] cluster is required as a cofactor.

The protein resides in the cell inner membrane. The enzyme catalyses a quinone + NADH + 5 H(+)(in) = a quinol + NAD(+) + 4 H(+)(out). Functionally, NDH-1 shuttles electrons from NADH, via FMN and iron-sulfur (Fe-S) centers, to quinones in the respiratory chain. Couples the redox reaction to proton translocation (for every two electrons transferred, four hydrogen ions are translocated across the cytoplasmic membrane), and thus conserves the redox energy in a proton gradient. In Dechloromonas aromatica (strain RCB), this protein is NADH-quinone oxidoreductase subunit B.